The following is a 567-amino-acid chain: Diphtheria toxin (567 aa).

The first 32 residues, 1–32, serve as a signal peptide directing secretion; the sequence is MLVRGYVVSRKLFASILIGALLGIGAPPSAHA. Positions 53 and 97 each coordinate NAD(+). The active site involves Glu180. Cystine bridges form between Cys218–Cys233 and Cys493–Cys503.

Homodimer. Proteolytic activation by host furin cleaves the protein in two parts, Diphtheria toxin fragment A and Diphtheria toxin fragment B; which remain associated via a disulfide bond.

The catalysed reaction is diphthamide-[translation elongation factor 2] + NAD(+) = N-(ADP-D-ribosyl)diphthamide-[translation elongation factor 2] + nicotinamide + H(+). With respect to regulation, partially inhibited by 1,8-naphthalimide (NAP). Functionally, diphtheria toxin, produced by a phage infecting Corynebacterium diphtheriae, is a proenzyme that, after activation, catalyzes the covalent attachment of the ADP ribose moiety of NAD to eukaryotic elongation factor 2 (eEF-2). Fragment A is the catalytic portion responsible for enzymatic ADP-ribosylation of elongation factor 2, while fragment B is responsible for binding of toxin to cell receptors and entry of fragment A. This Corynebacterium diphtheriae protein is Diphtheria toxin.